The primary structure comprises 399 residues: O-antigen polymerase (399 aa).

10 helical membrane-spanning segments follow: residues 4–24 (FPPGAILRDVLNVFFVALVLV), 37–57 (LVFTIFSWSAVILWVIALTIF), 64–84 (AIMGGRSYILFPAVFIALVIL), 97–117 (IVCYIIFLMFMVATISIIDVL), 151–171 (GGFSDALNFGYMLTLGVLLCM), 185–205 (IISFVLFIAICMSLTRGAILV), 222–242 (FCGITLFVIIIPVLAISTNIF), 309–329 (FFWIALETGIIGLIINIIYLA), 353–373 (LYFLFGSIYFISAALSSAPSS), and 374–394 (STFSIYYWTVLALIPFLKLTN).

It is found in the cell inner membrane. The catalysed reaction is n lipid-linked O-antigen repeat units = a lipid-linked O antigen + (n-1) polyisoprenyl diphosphate.. It participates in bacterial outer membrane biogenesis; LPS O-antigen biosynthesis. Polymerase involved in the biosynthesis of the lipopolysaccharide (LPS). Catalyzes the polymerization of the O-antigen repeat units on the periplasmic face of the inner membrane, leading to the formation of the lipid-linked O-antigen molecule. The polypeptide is O-antigen polymerase (Salmonella muenchen).